The following is an 80-amino-acid chain: UPF0154 protein SH1564 (80 aa).

A helical transmembrane segment spans residues 4–24 (WLAILLIIVALIGGLVGGFFL).

It belongs to the UPF0154 family.

The protein localises to the membrane. In Staphylococcus haemolyticus (strain JCSC1435), this protein is UPF0154 protein SH1564.